A 779-amino-acid polypeptide reads, in one-letter code: Ribosome-releasing factor 2, mitochondrial (779 aa).

The tr-type G domain occupies 68–353 (AKIRNIGIMA…AVTTYLPSPE (286 aa)). GTP is bound by residues 77–84 (AHIDAGKT), 141–145 (DTPGH), and 195–198 (NKMD).

This sequence belongs to the TRAFAC class translation factor GTPase superfamily. Classic translation factor GTPase family. EF-G/EF-2 subfamily.

It localises to the mitochondrion. The enzyme catalyses GTP + H2O = GDP + phosphate + H(+). Its function is as follows. Mitochondrial GTPase that mediates the disassembly of ribosomes from messenger RNA at the termination of mitochondrial protein biosynthesis. Acts in collaboration with MRRF. GTP hydrolysis follows the ribosome disassembly and probably occurs on the ribosome large subunit. Not involved in the GTP-dependent ribosomal translocation step during translation elongation. The protein is Ribosome-releasing factor 2, mitochondrial (Gfm2) of Mus musculus (Mouse).